The sequence spans 191 residues: Small ribosomal subunit protein uS10c (191 aa).

The transit peptide at 1-56 (MAVSTVSSFLLPSFGIPSSSPSSTRLKVSLLPSSSTHGGLSSCVLTKPSVSLTKVF) directs the protein to the chloroplast.

Belongs to the universal ribosomal protein uS10 family. In terms of assembly, part of the 30S ribosomal subunit.

Its subcellular location is the plastid. The protein localises to the chloroplast. This chain is Small ribosomal subunit protein uS10c (RPS10), found in Arabidopsis thaliana (Mouse-ear cress).